The primary structure comprises 476 residues: Cobyric acid synthase (476 aa).

Positions 242 to 428 constitute a GATase cobBQ-type domain; the sequence is AFRVVVPVPP…LHGLFDTPDA (187 aa). Catalysis depends on Cys323, which acts as the Nucleophile. Residue His420 is part of the active site.

The protein belongs to the CobB/CobQ family. CobQ subfamily.

It functions in the pathway cofactor biosynthesis; adenosylcobalamin biosynthesis. Functionally, catalyzes amidations at positions B, D, E, and G on adenosylcobyrinic A,C-diamide. NH(2) groups are provided by glutamine, and one molecule of ATP is hydrogenolyzed for each amidation. The polypeptide is Cobyric acid synthase (Janthinobacterium sp. (strain Marseille) (Minibacterium massiliensis)).